The sequence spans 353 residues: D-alanine--D-alanine ligase (353 aa).

The ATP-grasp domain maps to K141–E349. An ATP-binding site is contributed by E176–E231. 3 residues coordinate Mg(2+): D302, E316, and N318.

It belongs to the D-alanine--D-alanine ligase family. Mg(2+) serves as cofactor. The cofactor is Mn(2+).

It is found in the cytoplasm. It catalyses the reaction 2 D-alanine + ATP = D-alanyl-D-alanine + ADP + phosphate + H(+). Its pathway is cell wall biogenesis; peptidoglycan biosynthesis. In terms of biological role, cell wall formation. The chain is D-alanine--D-alanine ligase from Parasynechococcus marenigrum (strain WH8102).